We begin with the raw amino-acid sequence, 573 residues long: Mucin-13 (573 aa).

The signal sequence occupies residues 1–17 (MKGFLLLSLSLLLVTVG). Positions 16 to 234 (VGSSSQASST…VPSGGSTGPS (219 aa)) are enriched in low complexity. The disordered stretch occupies residues 16–237 (VGSSSQASST…GGSTGPSDLC (222 aa)). Topologically, residues 18–480 (SSSQASSTTS…FGYSGMNCKD (463 aa)) are extracellular. Residues 233–273 (PSDLCNPNPCKGTASCVKLHSKHFCLCLEGYYYNSSLSSCV) form the EGF-like 1 domain. Disulfide bonds link C237-C248, C242-C257, and C259-C272. N-linked (GlcNAc...) asparagine glycosylation is found at N266, N316, and N397. The 118-residue stretch at 274 to 391 (KGTTFPGDIS…DYVSINLCDH (118 aa)) folds into the SEA domain. EGF-like domains lie at 385–425 (SINL…PFCV) and 425–467 (VAVT…RKCE). Cystine bridges form between C389–C402, C394–C408, C410–C424, C429–C441, C433–C451, and C453–C466. Residues 481–508 (QFQLILTIVGTIAGALILILLIAFIVSA) traverse the membrane as a helical segment. The Cytoplasmic portion of the chain corresponds to 509–573 (RSKNKKKDGE…NQRSMPRPDY (65 aa)). The tract at residues 548-573 (PKVRTGVPSQTPNPYANQRSMPRPDY) is disordered. Polar residues predominate over residues 554–567 (VPSQTPNPYANQRS).

As to quaternary structure, homodimer of beta subunits. In terms of processing, cleaved into two subunits, alpha and beta, probably between the first EGF domain and the SEA domain. Beta subunit contains the cytoplasmic tail and alpha subunit the extracellular tail. The homooligomerization into dimers is dependent on intrachain disulfide bonds. Post-translationally, highly N-glycosylated.

The protein resides in the cell membrane. It localises to the secreted. Functionally, epithelial and hemopoietic transmembrane mucin that may play a role in cell signaling. The sequence is that of Mucin-13 (Muc13) from Mus musculus (Mouse).